A 126-amino-acid chain; its full sequence is Holo-[acyl-carrier-protein] synthase (126 aa).

Mg(2+)-binding residues include D9 and E58.

Belongs to the P-Pant transferase superfamily. AcpS family. The cofactor is Mg(2+).

It localises to the cytoplasm. It catalyses the reaction apo-[ACP] + CoA = holo-[ACP] + adenosine 3',5'-bisphosphate + H(+). Its function is as follows. Transfers the 4'-phosphopantetheine moiety from coenzyme A to a Ser of acyl-carrier-protein. The sequence is that of Holo-[acyl-carrier-protein] synthase from Photobacterium profundum (strain SS9).